A 281-amino-acid chain; its full sequence is 4-deoxy-L-threo-5-hexosulose-uronate ketol-isomerase (281 aa).

His198, His200, Glu205, and His248 together coordinate Zn(2+).

This sequence belongs to the KduI family. The cofactor is Zn(2+).

The enzyme catalyses 5-dehydro-4-deoxy-D-glucuronate = 3-deoxy-D-glycero-2,5-hexodiulosonate. It functions in the pathway glycan metabolism; pectin degradation; 2-dehydro-3-deoxy-D-gluconate from pectin: step 4/5. Catalyzes the isomerization of 5-dehydro-4-deoxy-D-glucuronate to 3-deoxy-D-glycero-2,5-hexodiulosonate. This Lacticaseibacillus paracasei (strain ATCC 334 / BCRC 17002 / CCUG 31169 / CIP 107868 / KCTC 3260 / NRRL B-441) (Lactobacillus paracasei) protein is 4-deoxy-L-threo-5-hexosulose-uronate ketol-isomerase.